The primary structure comprises 166 residues: HTH-type transcriptional regulator PrsX (166 aa).

The HTH marR-type domain maps to 25-159 (EHLLMQLCIR…FEVINKKLLA (135 aa)).

The protein resides in the cytoplasm. The chain is HTH-type transcriptional regulator PrsX (prsX) from Escherichia coli O6:H1 (strain CFT073 / ATCC 700928 / UPEC).